We begin with the raw amino-acid sequence, 138 residues long: Basic phospholipase A2 PL-Y (138 aa).

Residues 1-16 form the signal peptide; sequence MRTLWIMAVLLVGVEG. 7 disulfide bridges follow: C42-C131, C44-C60, C59-C111, C65-C138, C66-C104, C73-C97, and C91-C102. Ca(2+)-binding residues include Y43, G45, and G47. The active site involves H63. D64 serves as a coordination point for Ca(2+). D105 is an active-site residue.

It belongs to the phospholipase A2 family. Group II subfamily. D49 sub-subfamily. It depends on Ca(2+) as a cofactor. As to expression, expressed by the venom gland.

It localises to the secreted. The catalysed reaction is a 1,2-diacyl-sn-glycero-3-phosphocholine + H2O = a 1-acyl-sn-glycero-3-phosphocholine + a fatty acid + H(+). Snake venom phospholipase A2 (PLA2) that can cleave arachidonate at the sn-2 position from phospholipides in the micellar state or in bilayer membranes. PLA2 catalyzes the calcium-dependent hydrolysis of the 2-acyl groups in 3-sn-phosphoglycerides. This is Basic phospholipase A2 PL-Y from Protobothrops flavoviridis (Habu).